The sequence spans 272 residues: Tropinone reductase-like 1 (272 aa).

17-41 (IITGGASGIGACTAELFHENGAKVV) contributes to the NAD(+) binding site. Serine 150 contributes to the substrate binding site. Catalysis depends on tyrosine 163, which acts as the Proton acceptor.

It belongs to the short-chain dehydrogenases/reductases (SDR) family.

Has no tropinone reductase activity. The polypeptide is Tropinone reductase-like 1 (Erythroxylum coca (Coca plant)).